The sequence spans 553 residues: Putative transport protein YidE (553 aa).

Transmembrane regions (helical) follow at residues 4–24, 28–48, 65–85, 95–115, and 158–178; these read IALTVSILALVAVVGLFIGNV, GIGLGIGGVLFGGIIVGHFVS, FGLILFVYTIGIQVGPGFFAS, LFAVLIVIIGGLVTAILHKLF, and MSYAMAYPFGICGILFTMWML. RCK C-terminal domains follow at residues 191 to 276 and 279 to 361; these read QQHE…VIGQ and DTSL…VLGN. Transmembrane regions (helical) follow at residues 371–391, 393–413, 439–459, 464–484, 493–513, and 533–553; these read MLPVFIGIGLGVLLGSIPVFV, GFPAALKLGLAGGPLIMALIL, IVLFLSIVGLKSGGDFVNTLV, LSWIGYGALITAVPLITVGIL, YLTMCGMLAGSMTDPPALAFA, and LVMFLRIITPQLLAVLFWSIG.

This sequence belongs to the AAE transporter (TC 2.A.81) family. YidE subfamily.

It is found in the cell membrane. The protein is Putative transport protein YidE of Shigella flexneri serotype 5b (strain 8401).